The following is a 365-amino-acid chain: Spore germination protein A2 (365 aa).

The next 11 helical transmembrane spans lie at 12 to 32, 45 to 65, 85 to 105, 122 to 142, 148 to 168, 187 to 207, 223 to 243, 250 to 270, 275 to 295, 303 to 323, and 338 to 358; these read TFQG…LTLP, WITL…NTLI, WIGS…ASFE, PIQV…VGGL, LFPF…GISF, IANS…MLFL, LGFL…VGAL, TLIW…IFIE, FLLV…GYFA, FGLS…YFSL, and LGYI…IVAL.

The protein belongs to the amino acid-polyamine-organocation (APC) superfamily. Spore germination protein (SGP) (TC 2.A.3.9) family.

The protein resides in the cell membrane. Its function is as follows. Involved in the germinative response to L-alanine. Could be an amino acid transporter. Forms a complex at the inner spore membrane which acts as a receptor for L-alanine, thus is involved in the stimulation of germination in response to alanine. Can stimulate germination in the absence of gerD and gerK gene products (fructose and glucose receptors, respectively), but the response is improved in their presence. This is Spore germination protein A2 (gerAB) from Bacillus subtilis (strain 168).